The sequence spans 136 residues: Small ribosomal subunit protein uS9 (136 aa).

The segment at 97 to 136 is disordered; the sequence is SPDNRKPLKTEGHLSRDPRAKERRKYGLKKARKAPQFSKR. Positions 98-116 are enriched in basic and acidic residues; the sequence is PDNRKPLKTEGHLSRDPRA. Over residues 117 to 136 the composition is skewed to basic residues; sequence KERRKYGLKKARKAPQFSKR.

The protein belongs to the universal ribosomal protein uS9 family.

This is Small ribosomal subunit protein uS9 from Prochlorococcus marinus (strain AS9601).